Consider the following 385-residue polypeptide: tRNA 2-selenouridine synthase (385 aa).

One can recognise a Rhodanese domain in the interval 15 to 138; sequence FIADTPLIDV…ARQFLISTID (124 aa). The S-selanylcysteine intermediate role is filled by cysteine 98.

It belongs to the SelU family. As to quaternary structure, monomer.

The enzyme catalyses 5-methylaminomethyl-2-thiouridine(34) in tRNA + selenophosphate + (2E)-geranyl diphosphate + H2O + H(+) = 5-methylaminomethyl-2-selenouridine(34) in tRNA + (2E)-thiogeraniol + phosphate + diphosphate. It catalyses the reaction 5-methylaminomethyl-2-thiouridine(34) in tRNA + (2E)-geranyl diphosphate = 5-methylaminomethyl-S-(2E)-geranyl-thiouridine(34) in tRNA + diphosphate. The catalysed reaction is 5-methylaminomethyl-S-(2E)-geranyl-thiouridine(34) in tRNA + selenophosphate + H(+) = 5-methylaminomethyl-2-(Se-phospho)selenouridine(34) in tRNA + (2E)-thiogeraniol. It carries out the reaction 5-methylaminomethyl-2-(Se-phospho)selenouridine(34) in tRNA + H2O = 5-methylaminomethyl-2-selenouridine(34) in tRNA + phosphate. Functionally, involved in the post-transcriptional modification of the uridine at the wobble position (U34) of tRNA(Lys), tRNA(Glu) and tRNA(Gln). Catalyzes the conversion of 2-thiouridine (S2U-RNA) to 2-selenouridine (Se2U-RNA). Acts in a two-step process involving geranylation of 2-thiouridine (S2U) to S-geranyl-2-thiouridine (geS2U) and subsequent selenation of the latter derivative to 2-selenouridine (Se2U) in the tRNA chain. The protein is tRNA 2-selenouridine synthase of Nitrosomonas europaea (strain ATCC 19718 / CIP 103999 / KCTC 2705 / NBRC 14298).